A 440-amino-acid polypeptide reads, in one-letter code: Zinc finger MYND domain-containing protein 10 (440 aa).

Residues 366–440 are interaction with DNAAF11; that stretch reads QDLRLQARRW…VLAAQGDRAK (75 aa). The Zn(2+) site is built by cysteine 394, cysteine 397, cysteine 405, cysteine 408, cysteine 414, cysteine 418, histidine 426, and cysteine 430. The MYND-type zinc-finger motif lies at 394–430; it reads CAYCSAEASKRCSRCQNEWYCCRECQVKHWEKHGKTC.

The protein belongs to the ZMYND10 family. As to quaternary structure, interacts (via C-terminus) with DNAAF11 (via CS domain); this interaction stabilizes DNAAF11 at the protein level. Interacts (via C-terminus) with DNAL1; this interaction stabilizes DNAL1 at the protein level. Interacts with DNAAF4, HSPA8, IQUB, RUVBL2 and DYNTL5.

It is found in the cytoplasm. It localises to the cytoskeleton. Its subcellular location is the microtubule organizing center. The protein localises to the centrosome. The protein resides in the centriolar satellite. It is found in the apical cell membrane. It localises to the dynein axonemal particle. Functionally, plays a role in axonemal structure organization and motility. Involved in axonemal pre-assembly of inner and outer dynein arms (IDA and ODA, respectively) for proper axoneme building for cilia motility. May act by indirectly regulating transcription of dynein proteins. The polypeptide is Zinc finger MYND domain-containing protein 10 (Homo sapiens (Human)).